The primary structure comprises 106 residues: uncharacterized protein (106 aa).

The protein resides in the mitochondrion. This is an uncharacterized protein from Claviceps purpurea (Ergot fungus).